We begin with the raw amino-acid sequence, 361 residues long: Putative pumilio homolog 22 (361 aa).

Residues 5–348 form the PUM-HD domain; sequence RGYDLASQVL…NIVAIIDSET (344 aa). Pumilio repeat units follow at residues 27-63 and 64-103; these read HITYRHLLVLSSDDNGCVILKKVITIADDFLKDEFLD and LIAQHAHSLSMHDLGISLIQHVLELDFTKKTTQDDKRLHE. The stretch at 104-131 is one Pumilio 3; degenerate repeat; that stretch reads LMAEFDEVLSTSVTADVDKLHKLASKLM. Residues 132–167 form a Pumilio 4 repeat; the sequence is LDSDLFFEFVITRRGSLMIQIILGKSEEVDQVILAG. The stretch at 168 to 205 is one Pumilio 5; degenerate repeat; sequence VKQRFIDVTTNFYGYRIMIQTIKVFKKRGDLKVYDQIL. Residues 206 to 243 form a Pumilio 6; degenerate repeat; it reads RLIGVHALYLTKDPDMGNKTFQHAINLHHQDCTTFIAC. 2 Pumilio repeats span residues 244–284 and 285–319; these read GLQS…EIVK and CDEDTLVRLATDEYGNNILKKFLALAKEHKEDFFG.

It is found in the cytoplasm. Its function is as follows. Sequence-specific RNA-binding protein that regulates translation and mRNA stability by binding the 3'-UTR of target mRNAs. This chain is Putative pumilio homolog 22 (APUM22), found in Arabidopsis thaliana (Mouse-ear cress).